Consider the following 375-residue polypeptide: Anhydro-N-acetylmuramic acid kinase (375 aa).

Residue 12-19 (GTSMDGVD) coordinates ATP.

This sequence belongs to the anhydro-N-acetylmuramic acid kinase family.

It carries out the reaction 1,6-anhydro-N-acetyl-beta-muramate + ATP + H2O = N-acetyl-D-muramate 6-phosphate + ADP + H(+). It participates in amino-sugar metabolism; 1,6-anhydro-N-acetylmuramate degradation. It functions in the pathway cell wall biogenesis; peptidoglycan recycling. Catalyzes the specific phosphorylation of 1,6-anhydro-N-acetylmuramic acid (anhMurNAc) with the simultaneous cleavage of the 1,6-anhydro ring, generating MurNAc-6-P. Is required for the utilization of anhMurNAc either imported from the medium or derived from its own cell wall murein, and thus plays a role in cell wall recycling. This Photobacterium profundum (strain SS9) protein is Anhydro-N-acetylmuramic acid kinase.